A 6684-amino-acid polypeptide reads, in one-letter code: Replicase polyprotein 1ab (6684 aa).

The CoV Nsp1 globular domain maps to 2–108 (SSKQFKILVN…DFDLKIARTG (107 aa)). Positions 111–349 (AIYVDQYMCG…KSLVACSVKR (239 aa)) constitute a CoV Nsp2 N-terminal domain. Zn(2+) contacts are provided by Cys-240, Cys-242, Cys-259, and Cys-260. Residues 240–260 (CPCGSESSGVGDWTGFKTACC) form a C4 region. The CoV Nsp2 middle domain occupies 378–773 (NVGLLFKKTP…CNAARNDIEI (396 aa)). The region spanning 768 to 879 (RNDIEIGGIP…VQRMYNKMGG (112 aa)) is the CoV Nsp2 C-terminal domain. In terms of domain architecture, Ubiquitin-like 1 spans 882–983 (KTVSFSEEVD…DGIMISQYDI (102 aa)). Residues 989–1032 (EKSEVSASSEEEEVESVEEDPENEIVEASEGAEGTSSQEEVETV) are disordered. Over residues 997–1015 (SEEEEVESVEEDPENEIVE) the composition is skewed to acidic residues. The Peptidase C16 1 domain occupies 1055–1299 (PWAAAVDVQE…FKVEKVEQQP (245 aa)). Residue Cys-1093 is the For PL1-PRO activity of the active site. The C4-type 1; degenerate zinc finger occupies 1164–1195 (CGCGEKEIVLERAVFKLTPLKESFNYGVCGDC). Catalysis depends on for PL1-PRO activity residues His-1244 and Asp-1257. The Macro domain maps to 1318–1489 (NDDLILPFYK…TIENFFSCSI (172 aa)). One can recognise a Ubiquitin-like 2 domain in the interval 1486-1542 (SCSIPVNVTEDNVNHERVSVSFDKTYGEQLKGTVVIKDKDVTNQLPSAFDVGQKVIK). Positions 1550–1803 (AHYGFRDAAA…KVAASPKIVQ (254 aa)) constitute a Peptidase C16 2 domain. The active-site For PL2-PRO activity is Cys-1588. 4 residues coordinate Zn(2+): Cys-1667, Cys-1670, Cys-1694, and His-1696. The segment at 1667-1696 (CDKCAKVEKFVGPVVAAPLAIHGTDETCVH) adopts a C4-type 2; atypical zinc-finger fold. Catalysis depends on for PL2-PRO activity residues His-1741 and Asp-1754. A helical membrane pass occupies residues 1896-1916 (LVLLLIAIYNFFYLFVSIPVV). Residues 1896-2053 (LVLLLIAIYN…LALKHIVFAC (158 aa)) are HD1. The 3Ecto domain maps to 1905-1970 (NFFYLFVSIP…LQVTWDFKSD (66 aa)). 2 disulfide bridges follow: Cys-1921-Cys-1948 and Cys-1939-Cys-1945. 2 consecutive transmembrane segments (helical) span residues 1995–2015 (CFLM…FGYV) and 2033–2053 (FVIV…VFAC). The tract at residues 2044-2134 (LALKHIVFAC…SVKQTVYATD (91 aa)) is Y1. One can recognise a CoV Nsp3 Y domain in the interval 2044 to 2384 (LALKHIVFAC…PYERFTESVS (341 aa)). Positions 2048, 2053, 2058, 2061, 2094, 2097, 2101, and 2104 each coordinate Zn(2+). The ZF1 stretch occupies residues 2048-2061 (HIVFACSNPSCKTC). The segment at 2094–2104 (CKKHNFYCKNC) is ZF2. The segment at 2135 to 2224 (RSHQEVTKVE…IVNSDLLEDL (90 aa)) is Y2. The interval 2135–2384 (RSHQEVTKVE…PYERFTESVS (250 aa)) is coV-Y. A Y3 region spans residues 2225-2281 (SVDFKGALFNAKKNVIKNSFNVDVSECKNLDECYRACNLNVSFSTFEMAVNNAHRFG). The Y4 stretch occupies residues 2282-2384 (ILITDRSFNN…PYERFTESVS (103 aa)). 8 helical membrane passes run 2401–2421 (IVIL…YSVA), 2467–2487 (YGFI…VFDL), 2497–2517 (PAYV…AFGV), 2538–2558 (CVFN…VYCA), 2666–2686 (GAML…YGVL), 2695–2715 (CTFL…SYFV), 2721–2741 (FMII…YPGI), and 2746–2766 (FIIA…ILVF). The interval 2401 to 2766 (IVILVFVFIF…YVITAYILVF (366 aa)) is HD2. Positions 2783-2878 (LFEGDKFVGN…PTVSVNSTLQ (96 aa)) constitute a Nsp4C domain. One can recognise a Peptidase C30 domain in the interval 2879–3180 (SGLRKMAQPS…IRQMYGVNLQ (302 aa)). Active-site for 3CL-PRO activity residues include His-2919 and Cys-3022. The next 8 helical transmembrane spans lie at 3187–3207 (FFYP…EFFM), 3217–3237 (TFVS…VSGI), 3242–3262 (LFFM…NLFW), 3280–3300 (MFLP…IVFV), 3313–3333 (WFSL…IFGT), 3347–3367 (FVNM…VVIA), 3371–3391 (IAYY…FGFM), and 3394–3414 (ISIV…ILYW). Residues 3187 to 3414 (FFYPIMTAMT…FCCYYGILYW (228 aa)) form an HD3 region. One can recognise a RdRp Nsp7 cofactor domain in the interval 3475–3557 (SKLTEMKCTN…SYFENTTILQ (83 aa)). The region spanning 3558–3752 (SVASAYAALP…ITCERTTKLQ (195 aa)) is the RdRp Nsp8 cofactor domain. Residues 3753–3863 (NNEIMPGKLK…GYIGATVRLQ (111 aa)) form the Nsp9 ssRNA-binding domain. Residues 3864-4004 (AGKPTEHPSN…TSMQSFTVDQ (141 aa)) form the ExoN/MTase coactivator domain. Zn(2+) is bound by residues Cys-3937, Cys-3940, His-3946, Cys-3953, Cys-3979, Cys-3982, Cys-3990, and Cys-3992. 2 zinc fingers span residues 3937–3953 (CIYC…DGLC) and 3979–3992 (CVVC…GCMC). The 250-residue stretch at 4006 to 4255 (YLNRVRGSSA…ESENFVKSDI (250 aa)) folds into the NiRAN domain. The Nsp12 Interface domain maps to 4261-4359 (KQYDLLAYDF…WNLDVKLDTM (99 aa)). Zn(2+) contacts are provided by His-4290, Cys-4296, Cys-4301, Cys-4305, and Cys-4482. Positions 4360 to 4927 (KLSMTDLLRF…SLYEKSTVLQ (568 aa)) constitute a Nsp12 RNA-dependent RNA polymerase domain. The interval 4362–4576 (SMTDLLRFVT…HQKHLKSIAA (215 aa)) is rdRp Fingers N-ter. A rdRp Palm N-ter region spans residues 4577–4615 (TRNATVVIGSTKFYGGWDNMLKNLMRDVDNGCLMGWDYP). The region spanning 4607–4769 (GCLMGWDYPK…CYNKDYADLG (163 aa)) is the RdRp catalytic domain. The tract at residues 4616-4674 (KCDRALPNMIRMASAMILGSKHVGCCTHNDRFYRLSNELAQVLTEVVHCTGGFYFKPGG) is rdRp Fingers C-ter. Zn(2+) contacts are provided by His-4637, Cys-4640, and Cys-4641. A rdRp Palm C-ter region spans residues 4675-4810 (TTSGDGTTAY…SVGPHEFCSQ (136 aa)). Active-site residues include Ser-4754, Asp-4755, and Asp-4756. Positions 4811–4927 (HTLQIVGPDG…SLYEKSTVLQ (117 aa)) are rdRp Thumb. A CV ZBD domain is found at 4928 to 5040 (AAGMCVVCGS…EDFNKLAVSD (113 aa)). The Zn(2+) site is built by Cys-4932, Cys-4935, Cys-4943, Cys-4946, Cys-4953, Cys-4956, His-4960, His-4966, Cys-4977, Cys-4982, Cys-4999, and His-5002. The (+)RNA virus helicase ATP-binding domain occupies 5175–5366 (NTISKLYPVF…MCTLGPDVFL (192 aa)). 5210–5217 (GPPGSGKS) is a binding site for ATP. Positions 5367-5536 (HKCYRCPAEI…AKPETCGLFK (170 aa)) constitute a (+)RNA virus helicase C-terminal domain. The ExoN domain maps to 5598–5812 (LFCTRDFAMR…RCLAIHDCFV (215 aa)). Residues Asp-5616, Glu-5618, and Glu-5717 contribute to the active site. Zn(2+)-binding residues include Cys-5733, Cys-5735, Cys-5751, His-5754, His-5782, Cys-5786, and His-5789. Active-site residues include His-5793 and Asp-5798. Cys-5804 is a Zn(2+) binding site. One can recognise an N7-MTase domain in the interval 5821-6042 (YPFIDNEEKI…MLWHGFVNSK (222 aa)). Residue 5856 to 5862 (DVGNPKG) coordinates S-adenosyl-L-methionine. The gpppA-binding stretch occupies residues 5933-5947 (CNGGALYVNNHAFHT). Cys-5971, Cys-5988, Cys-5999, and His-6002 together coordinate Zn(2+). The region spanning 6046 to 6106 (SLENVAFNVV…NVAFELYAKR (61 aa)) is the Nsp15 N-terminal oligomerization domain. An AV-Nsp11N/CoV-Nsp15M domain is found at 6107–6224 (KLGLTPPLTI…IYVRKNGEYV (118 aa)). A NendoU domain is found at 6241–6381 (KPRSTMEEDF…ENSHIKTFYP (141 aa)). Catalysis depends on residues His-6271, His-6286, Lys-6327, Lys-6429, Asp-6513, Lys-6553, and Glu-6586. The 297-residue stretch at 6385–6681 (SAEWNPGYSM…KLLNFGNHFV (297 aa)) folds into the Nidovirus-type SAM-dependent 2'-O-MTase domain.

It belongs to the coronaviruses polyprotein 1ab family. As to quaternary structure, 3CL-PRO exists as monomer and homodimer. Eight copies of nsp7 and eight copies of nsp8 assemble to form a heterohexadecamer. Nsp9 is a dimer. Nsp10 forms a dodecamer. It depends on Mn(2+) as a cofactor. Post-translationally, specific enzymatic cleavages in vivo by its own proteases yield mature proteins. 3CL-PRO is autocatalytically processed.

It localises to the host membrane. The protein localises to the host cytoplasm. The protein resides in the host perinuclear region. It is found in the host endoplasmic reticulum-Golgi intermediate compartment. The enzyme catalyses Thiol-dependent hydrolysis of ester, thioester, amide, peptide and isopeptide bonds formed by the C-terminal Gly of ubiquitin (a 76-residue protein attached to proteins as an intracellular targeting signal).. The catalysed reaction is RNA(n) + a ribonucleoside 5'-triphosphate = RNA(n+1) + diphosphate. It carries out the reaction ATP + H2O = ADP + phosphate + H(+). It catalyses the reaction a 5'-end diphospho-ribonucleoside in mRNA + GTP + H(+) = a 5'-end (5'-triphosphoguanosine)-ribonucleoside in mRNA + diphosphate. The enzyme catalyses a 5'-end (N(7)-methyl 5'-triphosphoguanosine)-ribonucleoside in mRNA + S-adenosyl-L-methionine = a 5'-end (N(7)-methyl 5'-triphosphoguanosine)-(2'-O-methyl-ribonucleoside) in mRNA + S-adenosyl-L-homocysteine + H(+). The catalysed reaction is uridylyl-uridylyl-ribonucleotide-RNA = a 3'-end uridylyl-2',3'-cyclophospho-uridine-RNA + a 5'-end dephospho-ribonucleoside-RNA. In terms of biological role, the replicase polyprotein of coronaviruses is a multifunctional protein: it contains the activities necessary for the transcription of negative stranded RNA, leader RNA, subgenomic mRNAs and progeny virion RNA as well as proteinases responsible for the cleavage of the polyprotein into functional products. Non-structural protein 1 inhibits host translation. By suppressing host gene expression, nsp1 facilitates efficient viral gene expression in infected cells and evasion from host immune response. Functionally, the papain-like proteinase 1 (PLP1) and papain-like proteinase 2 (PLP2) are responsible for the cleavages located at the N-terminus of the replicase polyprotein. In addition, PLP2 possesses a deubiquitinating/deISGylating activity and processes both 'Lys-48'- and 'Lys-63'-linked polyubiquitin chains from cellular substrates. PLP2 also antagonizes innate immune induction of type I interferon by blocking the nuclear translocation of host IRF-3. Its function is as follows. Responsible for the majority of cleavages as it cleaves the C-terminus of replicase polyprotein at 11 sites. Recognizes substrates containing the core sequence [ILMVF]-Q-|-[SAGC]. Inhibited by the substrate-analog Cbz-Val-Asn-Ser-Thr-Leu-Gln-CMK. In terms of biological role, the helicase which contains a zinc finger structure displays RNA and DNA duplex-unwinding activities with 5' to 3' polarity. ATPase activity is strongly stimulated by poly(U), poly(dT), poly(C), poly(dA), but not by poly(G). The exoribonuclease acts on both ssRNA and dsRNA in a 3' to 5' direction. Functionally, nsp7-nsp8 hexadecamer may possibly confer processivity to the polymerase, maybe by binding to dsRNA or by producing primers utilized by the latter. Its function is as follows. Forms a primer, NSP9-pU, which is utilized by the polymerase for the initiation of RNA chains. Interacts with ribosome signal recognition particle RNA (SRP). Together with NSP8, suppress protein integration into the cell membrane, thereby disrupting host immune defenses. In terms of biological role, RNA-directed RNA polymerase that catalyzes the transcription of viral genomic and subgenomic RNAs. Acts in complex with nsp7 and nsp8 to transcribe both the minus and positive strands of genomic RNA. The kinase-like NiRAN domain of NSP12 attaches one or more nucleotides to the amino terminus of NSP9, forming a covalent RNA-protein intermediate that serves as transcription/replication primer. Subgenomic RNAs (sgRNAs) are formed by discontinuous transcription: The polymerase has the ability to pause at transcription-regulating sequences (TRS) and jump to the leader TRS, resulting in a major deletion. This creates a series of subgenomic RNAs that are replicated, transcribed and translated. In addition, Nsp12 is a subunit of the viral RNA capping enzyme that catalyzes the RNA guanylyltransferase reaction for genomic and sub-genomic RNAs. Subsequently, the NiRAN domain transfers RNA to GDP, and forms the core cap structure GpppA-RNA. Plays a role in viral transcription/replication and prevents the simultaneous activation of host cell dsRNA sensors, such as MDA5/IFIH1, OAS, and PKR. Acts by degrading the 5'-polyuridines generated during replication of the poly(A) region of viral genomic and subgenomic RNAs. Catalyzes a two-step reaction in which a 2'3'-cyclic phosphate (2'3'-cP) is first generated by 2'-O transesterification, which is then hydrolyzed to a 3'-phosphate (3'-P). If not degraded, poly(U) RNA would hybridize with poly(A) RNA tails and activate host dsRNA sensors. The polypeptide is Replicase polyprotein 1ab (rep) (Sus scrofa (Pig)).